A 338-amino-acid polypeptide reads, in one-letter code: Aspartate carbamoyltransferase catalytic subunit (338 aa).

2 residues coordinate carbamoyl phosphate: arginine 72 and threonine 73. Lysine 100 is a binding site for L-aspartate. Residues arginine 122, histidine 152, and glutamine 155 each contribute to the carbamoyl phosphate site. L-aspartate-binding residues include arginine 186 and arginine 243. Carbamoyl phosphate is bound by residues glycine 284 and proline 285.

Belongs to the aspartate/ornithine carbamoyltransferase superfamily. ATCase family. As to quaternary structure, heterododecamer (2C3:3R2) of six catalytic PyrB chains organized as two trimers (C3), and six regulatory PyrI chains organized as three dimers (R2).

It carries out the reaction carbamoyl phosphate + L-aspartate = N-carbamoyl-L-aspartate + phosphate + H(+). It participates in pyrimidine metabolism; UMP biosynthesis via de novo pathway; (S)-dihydroorotate from bicarbonate: step 2/3. In terms of biological role, catalyzes the condensation of carbamoyl phosphate and aspartate to form carbamoyl aspartate and inorganic phosphate, the committed step in the de novo pyrimidine nucleotide biosynthesis pathway. In Acinetobacter baumannii (strain SDF), this protein is Aspartate carbamoyltransferase catalytic subunit.